A 159-amino-acid polypeptide reads, in one-letter code: Large ribosomal subunit protein uL15 (159 aa).

Basic and acidic residues predominate over residues 1 to 13 (MRLNELRDNDGAT). Positions 1 to 41 (MRLNELRDNDGATKIRTRVGRGIGSGKGKTGGRGVKGQKSR) are disordered. Gly residues predominate over residues 21-35 (RGIGSGKGKTGGRGV).

It belongs to the universal ribosomal protein uL15 family. Part of the 50S ribosomal subunit.

Functionally, binds to the 23S rRNA. The chain is Large ribosomal subunit protein uL15 from Maricaulis maris (strain MCS10) (Caulobacter maris).